The chain runs to 383 residues: S-adenosylmethionine synthase (383 aa).

His22 contacts ATP. A Mg(2+)-binding site is contributed by Asp24. Residue Glu50 coordinates K(+). L-methionine-binding residues include Glu63 and Gln99. Positions 99-109 (QSSEINQAVQS) are flexible loop. ATP-binding positions include 160 to 162 (DMK), Asp235, 241 to 242 (RK), Ser258, and Lys262. Residue Asp235 participates in L-methionine binding. Lys266 serves as a coordination point for L-methionine.

This sequence belongs to the AdoMet synthase family. In terms of assembly, homotetramer; dimer of dimers. Requires Mg(2+) as cofactor. K(+) is required as a cofactor.

It localises to the cytoplasm. The enzyme catalyses L-methionine + ATP + H2O = S-adenosyl-L-methionine + phosphate + diphosphate. It participates in amino-acid biosynthesis; S-adenosyl-L-methionine biosynthesis; S-adenosyl-L-methionine from L-methionine: step 1/1. Its function is as follows. Catalyzes the formation of S-adenosylmethionine (AdoMet) from methionine and ATP. The overall synthetic reaction is composed of two sequential steps, AdoMet formation and the subsequent tripolyphosphate hydrolysis which occurs prior to release of AdoMet from the enzyme. The polypeptide is S-adenosylmethionine synthase (Mycoplasma pneumoniae (strain ATCC 29342 / M129 / Subtype 1) (Mycoplasmoides pneumoniae)).